The chain runs to 596 residues: Aspartate--tRNA(Asp/Asn) ligase (596 aa).

Glutamate 175 lines the L-aspartate pocket. The segment at 199–202 is aspartate; sequence QQYK. Arginine 221 and histidine 454 together coordinate L-aspartate. Position 221 to 223 (221 to 223) interacts with ATP; that stretch reads RDE. Position 488 (glutamate 488) interacts with ATP. Residue arginine 495 participates in L-aspartate binding. 540–543 is an ATP binding site; the sequence is GIDR.

This sequence belongs to the class-II aminoacyl-tRNA synthetase family. Type 1 subfamily. Homodimer.

It is found in the cytoplasm. It catalyses the reaction tRNA(Asx) + L-aspartate + ATP = L-aspartyl-tRNA(Asx) + AMP + diphosphate. Its function is as follows. Aspartyl-tRNA synthetase with relaxed tRNA specificity since it is able to aspartylate not only its cognate tRNA(Asp) but also tRNA(Asn). Reaction proceeds in two steps: L-aspartate is first activated by ATP to form Asp-AMP and then transferred to the acceptor end of tRNA(Asp/Asn). The chain is Aspartate--tRNA(Asp/Asn) ligase from Mesorhizobium japonicum (strain LMG 29417 / CECT 9101 / MAFF 303099) (Mesorhizobium loti (strain MAFF 303099)).